The following is a 345-amino-acid chain: Tropomodulin-4 (345 aa).

A disordered region spans residues Asn42–Leu63.

It belongs to the tropomodulin family. Binds to the N-terminus of tropomyosin and to actin.

The protein localises to the cytoplasm. It localises to the cytoskeleton. Its function is as follows. Blocks the elongation and depolymerization of the actin filaments at the pointed end. The Tmod/TM complex contributes to the formation of the short actin protofilament, which in turn defines the geometry of the membrane skeleton. This is Tropomodulin-4 (TMOD4) from Bos taurus (Bovine).